The sequence spans 309 residues: Cytochrome c biogenesis protein CcsA (309 aa).

The next 8 membrane-spanning stretches (helical) occupy residues 18 to 38, 43 to 63, 67 to 87, 102 to 122, 148 to 168, 216 to 236, 250 to 267, and 279 to 299; these read LGLLVFYILLVNLPISLGAFF, FFIVRVLTILINFLITLQLLF, ISGHFPISNLYESLYFLTWGI, IIPSIAIPIELLTVAFACFVL, VMLSYAALIIGSLLSASVLFI, SILIGFVLLTLGLISGAVWAN, TWAFISWMFYAAYLHMRI, and LATTGFLVVLICYLGVNFLGI.

This sequence belongs to the CcmF/CycK/Ccl1/NrfE/CcsA family. May interact with ccs1.

Its subcellular location is the cellular thylakoid membrane. In terms of biological role, required during biogenesis of c-type cytochromes (cytochrome c6 and cytochrome f) at the step of heme attachment. The sequence is that of Cytochrome c biogenesis protein CcsA from Prochlorococcus marinus (strain MIT 9215).